The following is an 80-amino-acid chain: Large ribosomal subunit protein eL38 (80 aa).

It belongs to the eukaryotic ribosomal protein eL38 family. As to quaternary structure, component of the large ribosomal subunit (LSU). Mature N.crassa ribosomes consist of a small (40S) and a large (60S) subunit. The 40S small subunit contains 1 molecule of ribosomal RNA (18S rRNA) and at least 32 different proteins. The large 60S subunit contains 3 rRNA molecules (26S, 5.8S and 5S rRNA) and at least 42 different proteins.

Its subcellular location is the cytoplasm. Functionally, component of the ribosome, a large ribonucleoprotein complex responsible for the synthesis of proteins in the cell. The small ribosomal subunit (SSU) binds messenger RNAs (mRNAs) and translates the encoded message by selecting cognate aminoacyl-transfer RNA (tRNA) molecules. The large subunit (LSU) contains the ribosomal catalytic site termed the peptidyl transferase center (PTC), which catalyzes the formation of peptide bonds, thereby polymerizing the amino acids delivered by tRNAs into a polypeptide chain. The nascent polypeptides leave the ribosome through a tunnel in the LSU and interact with protein factors that function in enzymatic processing, targeting, and the membrane insertion of nascent chains at the exit of the ribosomal tunnel. The polypeptide is Large ribosomal subunit protein eL38 (rpl-38) (Neurospora crassa (strain ATCC 24698 / 74-OR23-1A / CBS 708.71 / DSM 1257 / FGSC 987)).